A 148-amino-acid polypeptide reads, in one-letter code: Large ribosomal subunit protein bL9 (148 aa).

It belongs to the bacterial ribosomal protein bL9 family.

Functionally, binds to the 23S rRNA. This is Large ribosomal subunit protein bL9 from Clostridium perfringens (strain ATCC 13124 / DSM 756 / JCM 1290 / NCIMB 6125 / NCTC 8237 / Type A).